The chain runs to 1020 residues: Mastermind-like protein 1 (1020 aa).

The tract at residues 1-97 is required for interaction with NOTCH proteins; that stretch reads MVLPTCPMAE…PAPASAPAAA (97 aa). Serine 45 is subject to Phosphoserine. Over residues 67–76 the composition is skewed to basic residues; that stretch reads KAKRAGKHRQ. A disordered region spans residues 67–191; that stretch reads KAKRAGKHRQ…TAGKHSLGLD (125 aa). The span at 77-99 shows a compositional bias: low complexity; the sequence is PPAAATAPVAAPAPASAPAAARL. The span at 100–122 shows a compositional bias: basic and acidic residues; sequence DAADGPEHGRPVAHLHDTVKRSL. Over residues 124 to 133 the composition is skewed to polar residues; it reads SAASPQNGDQ. 4 positions are modified to phosphoserine: serine 127, serine 310, serine 321, and serine 367. Disordered stretches follow at residues 335-522, 575-598, 663-686, 725-748, 794-866, and 888-959; these read GASS…YGNT, PFRS…APAA, EKQQ…QSTF, SMGP…RGVA, QNAS…NPFT, and AMPS…RPGL. Residues 344-369 are compositionally biased toward polar residues; that stretch reads DSPSLGSSQTLFHTTSQPGVDNSSPN. Over residues 373–383 the composition is skewed to low complexity; the sequence is ASAQAQSAQRA. The span at 399-410 shows a compositional bias: polar residues; that stretch reads ELSSAHQLQQIA. A compositionally biased stretch (low complexity) spans 419-435; the sequence is LQNPQQAAPAPGPGQLA. The segment covering 491–515 has biased composition (polar residues); it reads PSHSNLLSHQSPSNLNQNPVNNQGS. Positions 588 to 598 are enriched in low complexity; that stretch reads PSSVPVAAPAA. Over residues 794 to 818 the composition is skewed to polar residues; that stretch reads QNASTSAAYGQNSLGSASLSQQHSK. Residue lysine 827 is modified to N6-acetyllysine. The span at 837-864 shows a compositional bias: polar residues; that stretch reads MGSQNASWQHQGMPNLSSQTSGNSSVNP. Positions 911–920 are enriched in low complexity; that stretch reads SAQQRNSAPA. Serine 1019 carries the post-translational modification Phosphoserine.

This sequence belongs to the mastermind family. In terms of assembly, interacts (via N-terminus) with NOTCH1, NOTCH2, NOTCH3 and NOTCH4 (via ankyrin repeat region). Interacts (via N-terminus) with p53 (via DNA-binding region). Forms a DNA-binding complex with Notch proteins and RBPSUH/RBP-J kappa/CBF1. Also binds CREBBP/CBP and CDK8. Forms a complex with PRAG1, NOTCH1 and MAML1, in a MAML1-dependent manner. At E9.5, strongly expressed in the telencephalon, first branchial arch, forelimb buds and somites. By 10.5 dpc, continuously expressed in brain and spinal cord. Also expressed in first and second branchial arches and limb buds. By 11.5 dpc, expression in CNS is weak but increases in mesodermal tissues. At 14.5 dpc, detected in epithelial cells in trachea, esophagus and proximal and distal tubules of the developing lungs.

It localises to the nucleus speckle. Its function is as follows. Acts as a transcriptional coactivator for NOTCH proteins. Has been shown to amplify NOTCH-induced transcription of HES1. Enhances phosphorylation and proteolytic turnover of the NOTCH intracellular domain in the nucleus through interaction with CDK8. Binds to CREBBP/CBP which promotes nucleosome acetylation at NOTCH enhancers and activates transcription. Induces phosphorylation and localization of CREBBP to nuclear foci. Plays a role in hematopoietic development by regulating NOTCH-mediated lymphoid cell fate decisions. The protein is Mastermind-like protein 1 of Mus musculus (Mouse).